Consider the following 91-residue polypeptide: MSLRKLTEGDLDEISSFLHNTISDFILKRVSAKEIVDIDITVLVEYTDELKVDISAELYLDELSDADPGIVDEAVDAAYRSLESFLDGFRE.

This sequence belongs to the UPF0440 family.

This is an uncharacterized protein from Methanothermobacter thermautotrophicus (strain ATCC 29096 / DSM 1053 / JCM 10044 / NBRC 100330 / Delta H) (Methanobacterium thermoautotrophicum).